The primary structure comprises 840 residues: MNGEYRGRGFGRGRFQSWKRGRGGGNFSGKWREREHRPDLSKTTGKRTSEQTPQFLLSTKTPQSMQSTLDRFIPYKGWKLYFSEVYSDSSPLIEKIQAFEKFFTRHIDLYDKDEIERKGSILVDFKELTEGGEVTNLIPDIATELRDAPEKTLACMGLAIHQVLTKDLERHAAELQAQEGLSNDGETMVNVPHIHARVYNYEPLTQLKNVRANYYGKYIALRGTVVRVSNIKPLCTKMAFLCAACGEIQSFPLPDGKYSLPTKCPVPVCRGRSFTALRSSPLTVTMDWQSIKIQELMSDDQREAGRIPRTIECELVHDLVDSCVPGDTVTITGIVKVSNAEEGSRNKNDKCMFLLYIEANSISNSKGQKTKSSEDGCKHGMLMEFSLKDLYAIQEIQAEENLFKLIVNSLCPVIFGHELVKAGLALALFGGSQKYADDKNRIPIRGDPHILVVGDPGLGKSQMLQAACNVAPRGVYVCGNTTTTSGLTVTLSKDSSSGDFALEAGALVLGDQGICGIDEFDKMGNQHQALLEAMEQQSISLAKAGVVCSLPARTSIIAAANPVGGHYNKAKTVSENLKMGSALLSRFDLVFILLDTPNEHHDHLLSEHVIAIRAGKQRTISSATVARMNSQDSNTSVLEVVSEKPLSERLKVVPGETIDPIPHQLLRKYIGYARQYVYPRLSTEAARVLQDFYLELRKQSQRLNSSPITTRQLESLIRLTEARARLELREEATKEDAEDIVEIMKYSMLGTYSDEFGNLDFERSQHGSGMSNRSTAKRFISALNNVAERTYNNIFQFHQLRQIAKELNIQVADFENFIGSLNDQGYLLKKGPKVYQLQTM.

Positions 16 to 54 are disordered; the sequence is QSWKRGRGGGNFSGKWREREHRPDLSKTTGKRTSEQTPQ. Over residues 30 to 40 the composition is skewed to basic and acidic residues; sequence KWREREHRPDL. The MCM domain maps to 402-609; the sequence is LFKLIVNSLC…HHDHLLSEHV (208 aa). 454 to 461 provides a ligand contact to ATP; the sequence is GDPGLGKS. Position 630 is a phosphoserine (Ser630).

The protein belongs to the MCM family. As to quaternary structure, component of the MCM8-MCM9 complex, which forms a hexamer composed of MCM8 and MCM9. Interacts with the DNA mismatch repair (MMR) complex composed at least of MSH2, MSH3, MSH6, PMS1 and MLH1. Interacts with RAD51; the interaction recruits RAD51 to DNA damage sites. Interacts with the MRN complex composed of MRE11, RAD50 and NBN/NBS1. Interacts with CDC6 and ORC2. Interacts with HROB; the interaction recruits the MCM8-MCM9 complex to DNA damage sites. As to expression, highest levels in placenta, lung and pancreas. Low levels in skeletal muscle and kidney. Expressed in various tumors with highest levels in colon and lung cancers.

It is found in the nucleus. The protein resides in the chromosome. The enzyme catalyses ATP + H2O = ADP + phosphate + H(+). Component of the MCM8-MCM9 complex, a complex involved in the repair of double-stranded DNA breaks (DBSs) and DNA interstrand cross-links (ICLs) by homologous recombination (HR). Required for DNA resection by the MRE11-RAD50-NBN/NBS1 (MRN) complex by recruiting the MRN complex to the repair site and by promoting the complex nuclease activity. Probably by regulating the localization of the MNR complex, indirectly regulates the recruitment of downstream effector RAD51 to DNA damage sites including DBSs and ICLs. The MCM8-MCM9 complex is dispensable for DNA replication and S phase progression. However, may play a non-essential for DNA replication: may be involved in the activation of the prereplicative complex (pre-RC) during G(1) phase by recruiting CDC6 to the origin recognition complex (ORC). Probably by regulating HR, plays a key role during gametogenesis. Stabilizes MCM9 protein. This Homo sapiens (Human) protein is DNA helicase MCM8 (MCM8).